The chain runs to 368 residues: 1-deoxy-D-xylulose 5-phosphate reductoisomerase (368 aa).

Threonine 9, glycine 10, serine 11, isoleucine 12, asparagine 35, and asparagine 106 together coordinate NADPH. Lysine 107 contacts 1-deoxy-D-xylulose 5-phosphate. Residue glutamate 108 participates in NADPH binding. Aspartate 132 is a binding site for Mn(2+). 1-deoxy-D-xylulose 5-phosphate contacts are provided by serine 133, glutamate 134, serine 158, and histidine 181. Position 134 (glutamate 134) interacts with Mn(2+). Glycine 187 provides a ligand contact to NADPH. Residues serine 194, asparagine 199, lysine 200, and glutamate 203 each contribute to the 1-deoxy-D-xylulose 5-phosphate site. A Mn(2+)-binding site is contributed by glutamate 203.

This sequence belongs to the DXR family. It depends on Mg(2+) as a cofactor. Mn(2+) serves as cofactor.

It carries out the reaction 2-C-methyl-D-erythritol 4-phosphate + NADP(+) = 1-deoxy-D-xylulose 5-phosphate + NADPH + H(+). The protein operates within isoprenoid biosynthesis; isopentenyl diphosphate biosynthesis via DXP pathway; isopentenyl diphosphate from 1-deoxy-D-xylulose 5-phosphate: step 1/6. Its function is as follows. Catalyzes the NADPH-dependent rearrangement and reduction of 1-deoxy-D-xylulose-5-phosphate (DXP) to 2-C-methyl-D-erythritol 4-phosphate (MEP). The chain is 1-deoxy-D-xylulose 5-phosphate reductoisomerase from Mycoplasmoides gallisepticum (strain R(low / passage 15 / clone 2)) (Mycoplasma gallisepticum).